Consider the following 224-residue polypeptide: UPF0758 protein Nmul_A2138 (224 aa).

The 123-residue stretch at 102–224 (AMDSPGPVRA…TLSFAEQGLI (123 aa)) folds into the MPN domain. Zn(2+)-binding residues include His-173, His-175, and Asp-186. A JAMM motif motif is present at residues 173–186 (HNHPSGAAEPSHAD).

It belongs to the UPF0758 family.

The sequence is that of UPF0758 protein Nmul_A2138 from Nitrosospira multiformis (strain ATCC 25196 / NCIMB 11849 / C 71).